A 266-amino-acid chain; its full sequence is Aquaporin TIP3-2 (266 aa).

The next 2 helical transmembrane spans lie at 29–49 (AAIS…GSVL) and 66–86 (GLVA…AVAV). Residues 94 to 96 (NPA) carry the NPA 1 motif. The next 3 membrane-spanning stretches (helical) occupy residues 109-129 (LVRA…ATLL), 153-173 (AVLL…ATVV), and 180-200 (LGTI…LAGG). Positions 208 to 210 (NPA) match the NPA 2 motif. Residues 228-248 (YWLGPFLGAGLAGLVYEYLLI) traverse the membrane as a helical segment.

It belongs to the MIP/aquaporin (TC 1.A.8) family. TIP (TC 1.A.8.10) subfamily.

The protein resides in the vacuole membrane. Its function is as follows. Aquaporins facilitate the transport of water and small neutral solutes across cell membranes. The polypeptide is Aquaporin TIP3-2 (TIP3-2) (Zea mays (Maize)).